A 59-amino-acid chain; its full sequence is Small ribosomal subunit protein bS21 (59 aa).

The protein belongs to the bacterial ribosomal protein bS21 family.

In Acaryochloris marina (strain MBIC 11017), this protein is Small ribosomal subunit protein bS21.